Consider the following 91-residue polypeptide: Uteroglobin (91 aa).

The first 21 residues, 1 to 21, serve as a signal peptide directing secretion; that stretch reads MKLTIAIVLVTLTLFCRPAST.

Belongs to the secretoglobin family. In terms of assembly, antiparallel homodimer; disulfide-linked. Interaction with LMBR1L is controversial.

Its subcellular location is the secreted. In terms of biological role, binds phosphatidylcholine, phosphatidylinositol, polychlorinated biphenyls (PCB) and weakly progesterone, potent inhibitor of phospholipase A2. The sequence is that of Uteroglobin (SCGB1A1) from Bos taurus (Bovine).